The following is a 168-amino-acid chain: Type-2 ice-structuring protein (168 aa).

Residues 1-17 (MLTVSLLVCAMMALTQA) form the signal peptide. Residues 18-34 (DHDGVLKGTATEAGEVS) constitute a propeptide that is removed on maturation. 5 disulfides stabilise this stretch: Cys-45-Cys-56, Cys-73-Cys-163, Cys-107-Cys-138, Cys-127-Cys-149, and Cys-139-Cys-155. Residues 52–164 (HGQRCFYSEA…CPASHASICA (113 aa)) enclose the C-type lectin domain.

Its subcellular location is the secreted. Its function is as follows. Has antifreeze activity to protect fish blood from freezing at subzero sea water temperatures. Binds to ice crystals and inhibits their growth. The thermal hysteresis (TH) activity, the ability to lower the blood freezing point, is approximately 0.45 degrees Celsius at 0.15 mM for this protein. In Brachyopsis segaliensis (Sea poacher), this protein is Type-2 ice-structuring protein.